Reading from the N-terminus, the 106-residue chain is UPF0145 protein Tpet_0165 (106 aa).

This sequence belongs to the UPF0145 family.

This Thermotoga petrophila (strain ATCC BAA-488 / DSM 13995 / JCM 10881 / RKU-1) protein is UPF0145 protein Tpet_0165.